Here is a 154-residue protein sequence, read N- to C-terminus: Catabolic 3-dehydroquinase (154 aa).

Catalysis depends on Tyr25, which acts as the Proton acceptor. Positions 79, 85, and 92 each coordinate substrate. The active-site Proton donor is His105. Substrate contacts are provided by residues 106–107 (IS) and Arg116.

This sequence belongs to the type-II 3-dehydroquinase family. In terms of assembly, homododecamer. Adopts a ring-like structure, composed of an arrangement of two hexameric rings stacked on top of one another.

The enzyme catalyses 3-dehydroquinate = 3-dehydroshikimate + H2O. The protein operates within aromatic compound metabolism; 3,4-dihydroxybenzoate biosynthesis; 3,4-dihydroxybenzoate from 3-dehydroquinate: step 1/2. Its function is as follows. Is involved in the catabolism of quinate. Allows the utilization of quinate as carbon source via the beta-ketoadipate pathway. This is Catabolic 3-dehydroquinase from Sclerotinia sclerotiorum (strain ATCC 18683 / 1980 / Ss-1) (White mold).